The primary structure comprises 233 residues: Somatolactin (233 aa).

The signal sequence occupies residues Met1 to Gly24. 3 disulfide bridges follow: Cys29–Cys39, Cys89–Cys205, and Cys222–Cys230.

The protein belongs to the somatotropin/prolactin family. Pituitary gland.

The protein localises to the secreted. May be associated with ion regulation and reproduction. In Oncorhynchus keta (Chum salmon), this protein is Somatolactin.